The primary structure comprises 1238 residues: Inner capsid protein VP2 (1238 aa).

The tract at residues 1 to 35 (MSTSAKKTPESKTEDKIEPVIEQTSNDKPEPPPNK) is disordered. The span at 7 to 30 (KTPESKTEDKIEPVIEQTSNDKPE) shows a compositional bias: basic and acidic residues.

The protein belongs to the turreted BTV-fold inner capsid family. Homodecamer; each decamer is made up of two conformers of VP2, called VP2A and VP2B. 12 homodecamers assemble to form an icosahedral capsid.

The protein resides in the virion. Inner capsid protein that self-assembles to form an icosahedral capsid with a T=2 symmetry, which consists of 120 copies of VP2, with channels at each of its five-fold vertices. This capsid constitutes the innermost concentric layer of the viral mature particle. The polypeptide is Inner capsid protein VP2 (S2) (Cryphonectria parasitica (Chestnut blight fungus)).